We begin with the raw amino-acid sequence, 419 residues long: Epothilone C/D epoxidase (419 aa).

Substrate is bound by residues Ala180 and Gly304. Cys365 is a heme binding site.

This sequence belongs to the cytochrome P450 family. The cofactor is heme.

The catalysed reaction is epothilone C + 2 reduced [2Fe-2S]-[ferredoxin] + O2 + 2 H(+) = epothilone A + 2 oxidized [2Fe-2S]-[ferredoxin] + H2O. It carries out the reaction epothilone D + 2 reduced [2Fe-2S]-[ferredoxin] + O2 + 2 H(+) = epothilone B + 2 oxidized [2Fe-2S]-[ferredoxin] + H2O. Its pathway is secondary metabolite biosynthesis; epothilone biosynthesis. In terms of biological role, involved in the biosynthesis of epothilones, macrolactones which have a narrow anti-fungal spectrum and microtubule-stabilizing activity. Catalyzes the epoxidation of epothilones C and D to epothilones A and B, respectively. The polypeptide is Epothilone C/D epoxidase (cyp167A1) (Sorangium cellulosum (Polyangium cellulosum)).